The sequence spans 655 residues: Broad substrate specificity ATP-binding cassette transporter ABCG2 (655 aa).

Residues 1–395 (MSSSNVEVFI…KNLLGNPQAS (395 aa)) are Cytoplasmic-facing. An ABC transporter domain is found at 37–286 (LSFHNICYRV…FESAGYHCEA (250 aa)). Residues 80–87 (GPTGGGKS), 184–190 (RGVSGGE), E211, and H243 contribute to the ATP site. T362 is subject to Phosphothreonine; by PIM1. Positions 389-651 (LGNPQASIAQ…TIAYLKLLFL (263 aa)) constitute an ABC transmembrane type-2 domain. The chain crosses the membrane as a helical span at residues 396–416 (IAQIIVTVVLGLVIGAIYFGL). At 417–428 (KNDSTGIQNRAG) the chain is on the extracellular side. Residues 429–449 (VLFFLTTNQCFSSVSAVELFV) form a helical membrane-spanning segment. The Cytoplasmic portion of the chain corresponds to 450–477 (VEKKLFIHEYISGYYRVSSYFLGKLLSD). Residues 478–498 (LLPMRMLPSIIFTCIVYFMLG) traverse the membrane as a helical segment. Topologically, residues 499–506 (LKPKADAF) are extracellular. A helical transmembrane segment spans residues 507–527 (FVMMFTLMMVAYSASSMALAI). The Cytoplasmic portion of the chain corresponds to 528–535 (AAGQSVVS). The helical transmembrane segment at 536–556 (VATLLMTICFVFMMIFSGLLV) threads the bilayer. Over 557–630 (NLTTIASWLS…LSPWGLWKNH (74 aa)) the chain is Extracellular. Residues C592 and C608 are joined by a disulfide bond. Residue N596 is glycosylated (N-linked (GlcNAc...) asparagine). The helical transmembrane segment at 631 to 651 (VALACMIVIFLTIAYLKLLFL) threads the bilayer. Topologically, residues 652–655 (KKYS) are cytoplasmic.

The protein belongs to the ABC transporter superfamily. ABCG family. Eye pigment precursor importer (TC 3.A.1.204) subfamily. Homodimer; disulfide-linked. The minimal functional unit is a homodimer, but the major oligomeric form in plasma membrane is a homotetramer with possibility of higher order oligomerization up to homododecamers. Post-translationally, N-glycosylated. Glycosylation-deficient ABCG2 is normally expressed and functional. Phosphorylated. Phosphorylation at Thr-362 by PIM1 is induced by drugs like mitoxantrone and is associated with cells increased drug resistance. It regulates the localization to the plasma membrane, the homooligomerization and therefore, the activity of the transporter. In terms of tissue distribution, highly expressed in placenta. Low expression in small intestine, liver and colon. Expressed in brain (at protein level).

Its subcellular location is the cell membrane. The protein localises to the apical cell membrane. It is found in the mitochondrion membrane. It catalyses the reaction ATP + H2O + xenobioticSide 1 = ADP + phosphate + xenobioticSide 2.. The catalysed reaction is urate(in) + ATP + H2O = urate(out) + ADP + phosphate + H(+). The enzyme catalyses indoxyl sulfate(in) + ATP + H2O = indoxyl sulfate(out) + ADP + phosphate + H(+). It carries out the reaction sphing-4-enine 1-phosphate(in) + ATP + H2O = sphing-4-enine 1-phosphate(out) + ADP + phosphate + H(+). It catalyses the reaction estrone 3-sulfate(in) + ATP + H2O = estrone 3-sulfate(out) + ADP + phosphate + H(+). The catalysed reaction is dehydroepiandrosterone 3-sulfate(in) + ATP + H2O = dehydroepiandrosterone 3-sulfate(out) + ADP + phosphate + H(+). The enzyme catalyses 4-methylumbelliferone sulfate(in) + ATP + H2O = 4-methylumbelliferone sulfate(out) + ADP + phosphate + H(+). It carries out the reaction 5,7-dimethyl-2-methylamino-4-(3-pyridylmethyl)-1,3-benzothiazol-6-yl beta-D-glucuronate(in) + ATP + H2O = 5,7-dimethyl-2-methylamino-4-(3-pyridylmethyl)-1,3-benzothiazol-6-yl beta-D-glucuronate(out) + ADP + phosphate + H(+). It catalyses the reaction 4-methylumbelliferone beta-D-glucuronate(in) + ATP + H2O = 4-methylumbelliferone beta-D-glucuronate(out) + ADP + phosphate + H(+). The catalysed reaction is 5,7-dimethyl-2-methylamino-4-(3-pyridylmethyl)-1,3-benzothiazol-6-yl sulfate(in) + ATP + H2O = 5,7-dimethyl-2-methylamino-4-(3-pyridylmethyl)-1,3-benzothiazol-6-yl sulfate(out) + ADP + phosphate + H(+). The enzyme catalyses 17beta-estradiol 17-O-(beta-D-glucuronate)(in) + ATP + H2O = 17beta-estradiol 17-O-(beta-D-glucuronate)(out) + ADP + phosphate + H(+). It carries out the reaction methotrexate(in) + ATP + H2O = methotrexate(out) + ADP + phosphate + H(+). It catalyses the reaction riboflavin(in) + ATP + H2O = riboflavin(out) + ADP + phosphate + H(+). The catalysed reaction is pheophorbide a(in) + ATP + H2O = pheophorbide a(out) + ADP + phosphate + H(+). The enzyme catalyses itaconate(in) + ATP + H2O = itaconate(out) + ADP + phosphate + H(+). Its activity is regulated as follows. Specifically inhibited by the fungal toxin fumitremorgin C and Ko143. Broad substrate specificity ATP-dependent transporter of the ATP-binding cassette (ABC) family that actively extrudes a wide variety of physiological compounds, dietary toxins and xenobiotics from cells. Involved in porphyrin homeostasis, mediating the export of protoporphyrin IX (PPIX) from both mitochondria to cytosol and cytosol to extracellular space, it also functions in the cellular export of heme. Also mediates the efflux of sphingosine-1-P from cells. Acts as a urate exporter functioning in both renal and extrarenal urate excretion. In kidney, it also functions as a physiological exporter of the uremic toxin indoxyl sulfate. Also involved in the excretion of steroids like estrone 3-sulfate/E1S, 3beta-sulfooxy-androst-5-en-17-one/DHEAS, and other sulfate conjugates. Mediates the secretion of the riboflavin and biotin vitamins into milk. Extrudes pheophorbide a, a phototoxic porphyrin catabolite of chlorophyll, reducing its bioavailability. Plays an important role in the exclusion of xenobiotics from the brain. It confers to cells a resistance to multiple drugs and other xenobiotics including mitoxantrone, pheophorbide, camptothecin, methotrexate, azidothymidine, and the anthracyclines daunorubicin and doxorubicin, through the control of their efflux. In placenta, it limits the penetration of drugs from the maternal plasma into the fetus. May play a role in early stem cell self-renewal by blocking differentiation. In inflammatory macrophages, exports itaconate from the cytosol to the extracellular compartment and limits the activation of TFEB-dependent lysosome biogenesis involved in antibacterial innate immune response. This Homo sapiens (Human) protein is Broad substrate specificity ATP-binding cassette transporter ABCG2 (ABCG2).